The chain runs to 273 residues: 4-hydroxy-tetrahydrodipicolinate reductase (273 aa).

12–17 (GANGRM) is an NAD(+) binding site. Arginine 39 contributes to the NADP(+) binding site. NAD(+) is bound by residues 102–104 (GTT) and 126–129 (AANF). The active-site Proton donor/acceptor is histidine 159. Residue histidine 160 coordinates (S)-2,3,4,5-tetrahydrodipicolinate. Lysine 163 functions as the Proton donor in the catalytic mechanism. 169 to 170 (GT) contributes to the (S)-2,3,4,5-tetrahydrodipicolinate binding site.

Belongs to the DapB family. Homotetramer.

The protein resides in the cytoplasm. It catalyses the reaction (S)-2,3,4,5-tetrahydrodipicolinate + NAD(+) + H2O = (2S,4S)-4-hydroxy-2,3,4,5-tetrahydrodipicolinate + NADH + H(+). The enzyme catalyses (S)-2,3,4,5-tetrahydrodipicolinate + NADP(+) + H2O = (2S,4S)-4-hydroxy-2,3,4,5-tetrahydrodipicolinate + NADPH + H(+). The protein operates within amino-acid biosynthesis; L-lysine biosynthesis via DAP pathway; (S)-tetrahydrodipicolinate from L-aspartate: step 4/4. Functionally, catalyzes the conversion of 4-hydroxy-tetrahydrodipicolinate (HTPA) to tetrahydrodipicolinate. In Cronobacter sakazakii (strain ATCC BAA-894) (Enterobacter sakazakii), this protein is 4-hydroxy-tetrahydrodipicolinate reductase.